We begin with the raw amino-acid sequence, 241 residues long: Phosphoribosylformylglycinamidine synthase subunit PurQ (241 aa).

Residues 6 to 241 (NVGIVVFPGS…QSLLLASAFA (236 aa)) form the Glutamine amidotransferase type-1 domain. Cys90 acts as the Nucleophile in catalysis. Catalysis depends on residues His207 and Glu209.

In terms of assembly, part of the FGAM synthase complex composed of 1 PurL, 1 PurQ and 2 PurS subunits.

It is found in the cytoplasm. It catalyses the reaction N(2)-formyl-N(1)-(5-phospho-beta-D-ribosyl)glycinamide + L-glutamine + ATP + H2O = 2-formamido-N(1)-(5-O-phospho-beta-D-ribosyl)acetamidine + L-glutamate + ADP + phosphate + H(+). It carries out the reaction L-glutamine + H2O = L-glutamate + NH4(+). Its pathway is purine metabolism; IMP biosynthesis via de novo pathway; 5-amino-1-(5-phospho-D-ribosyl)imidazole from N(2)-formyl-N(1)-(5-phospho-D-ribosyl)glycinamide: step 1/2. Functionally, part of the phosphoribosylformylglycinamidine synthase complex involved in the purines biosynthetic pathway. Catalyzes the ATP-dependent conversion of formylglycinamide ribonucleotide (FGAR) and glutamine to yield formylglycinamidine ribonucleotide (FGAM) and glutamate. The FGAM synthase complex is composed of three subunits. PurQ produces an ammonia molecule by converting glutamine to glutamate. PurL transfers the ammonia molecule to FGAR to form FGAM in an ATP-dependent manner. PurS interacts with PurQ and PurL and is thought to assist in the transfer of the ammonia molecule from PurQ to PurL. The sequence is that of Phosphoribosylformylglycinamidine synthase subunit PurQ from Thermosynechococcus vestitus (strain NIES-2133 / IAM M-273 / BP-1).